Consider the following 693-residue polypeptide: UvrABC system protein B (693 aa).

Positions 35–188 (ERINNGEKDV…DQLLRQFVGI (154 aa)) constitute a Helicase ATP-binding domain. 48-55 (GATGTGKS) contributes to the ATP binding site. A Beta-hairpin motif is present at residues 101-124 (YYDYYQPEAYVPQTDTFIEKDSSV). Residues 438-600 (QIDDLLGEIR…VDPTPLRKRI (163 aa)) form the Helicase C-terminal domain. The interval 612–634 (ADTKSLLESAGKGRSRGKAPVPV) is disordered. The 36-residue stretch at 648-683 (VDLIEQLTAQMHSAAGELQFELAARLRDEVGDLKKE) folds into the UVR domain.

It belongs to the UvrB family. Forms a heterotetramer with UvrA during the search for lesions. Interacts with UvrC in an incision complex.

The protein localises to the cytoplasm. Functionally, the UvrABC repair system catalyzes the recognition and processing of DNA lesions. A damage recognition complex composed of 2 UvrA and 2 UvrB subunits scans DNA for abnormalities. Upon binding of the UvrA(2)B(2) complex to a putative damaged site, the DNA wraps around one UvrB monomer. DNA wrap is dependent on ATP binding by UvrB and probably causes local melting of the DNA helix, facilitating insertion of UvrB beta-hairpin between the DNA strands. Then UvrB probes one DNA strand for the presence of a lesion. If a lesion is found the UvrA subunits dissociate and the UvrB-DNA preincision complex is formed. This complex is subsequently bound by UvrC and the second UvrB is released. If no lesion is found, the DNA wraps around the other UvrB subunit that will check the other stand for damage. The protein is UvrABC system protein B of Renibacterium salmoninarum (strain ATCC 33209 / DSM 20767 / JCM 11484 / NBRC 15589 / NCIMB 2235).